A 447-amino-acid polypeptide reads, in one-letter code: MITMSRIRSLAAFAVFVILGVAAVLPAQAEVRIDITRGQMKPLPIAIPDFAGASAQDNRMGADIARVVSADLERSGLFKPIDPKAFIQNAASLQAGPRFPDWKAINAEALVSGKIESGADGRVRVEFRLWDVFNEAYMTGWTLSASPQDWRRLSHKVADAIYKRVTGEDGYFDTQIVYIAESGPKNDRKKRLSIMDQDGENHRFLTDGSELVLTPRFSPSAREITYLSYFKGVPRVYIFNLDTGRRESLGNFPGMTFAPRFSPDGNKVVFSMAENGNTEIYEMNLLTRQKRQLTMNPAIDTAPSYSPDGQQIVFESDRGGGQQIYTMSADGSNPQRISFGDGRYGTPVWSPRGDLIAFTKQKGGQFFIGVMRTDGSGERLLAEGFLVEGPTWAPNGRVLSFFRESPSDERGRGQVVRLYTIDLTGVNERVLLTPVDGSDPAWSPLIP.

The N-terminal stretch at 1–29 (MITMSRIRSLAAFAVFVILGVAAVLPAQA) is a signal peptide.

Belongs to the TolB family. As to quaternary structure, the Tol-Pal system is composed of five core proteins: the inner membrane proteins TolA, TolQ and TolR, the periplasmic protein TolB and the outer membrane protein Pal. They form a network linking the inner and outer membranes and the peptidoglycan layer.

The protein resides in the periplasm. Functionally, part of the Tol-Pal system, which plays a role in outer membrane invagination during cell division and is important for maintaining outer membrane integrity. The protein is Tol-Pal system protein TolB of Paramagnetospirillum magneticum (strain ATCC 700264 / AMB-1) (Magnetospirillum magneticum).